The chain runs to 205 residues: Meiotic nuclear division protein 1 homolog (205 aa).

Serine 2 is subject to N-acetylserine. Residues lysine 83–isoleucine 173 adopt a coiled-coil conformation.

This sequence belongs to the MND1 family. In terms of assembly, heterodimer with PSMC3IP/HOP2. MND1-PSMC3IP interacts with DMC1 and RAD51 and binds to ssDNA and dsDNA showing no preference for either form of DNA.

The protein resides in the nucleus. Its function is as follows. Required for proper homologous chromosome pairing and efficient cross-over and intragenic recombination during meiosis. Stimulates both DMC1- and RAD51-mediated homologous strand assimilation, which is required for the resolution of meiotic double-strand breaks. The sequence is that of Meiotic nuclear division protein 1 homolog from Mus musculus (Mouse).